A 124-amino-acid chain; its full sequence is Kalata-B1 (124 aa).

The N-terminal stretch at 1–22 (MAKFTVCLLLCLLLAAFVGAFG) is a signal peptide. Positions 23-88 (SELSDSHKTT…QVFLKQLQLK (66 aa)) are excised as a propeptide. Residues 89 to 117 (GLPVCGETCVGGTCNTPGCTCSWPVCTRN) constitute a cross-link (cyclopeptide (Gly-Asn)). 3 cysteine pairs are disulfide-bonded: cysteine 93/cysteine 107, cysteine 97/cysteine 109, and cysteine 102/cysteine 114. Positions 118–124 (GLPSLAA) are excised as a propeptide.

It belongs to the cyclotide family. Moebius subfamily. Kalata-B1 is a cyclic peptide which occurs in three forms: with unmodified Trp-111, with Trp-111 oxidized to form oxindolylalanine and with Trp-111 oxidized to form N-formylkynurenine. Oxidation is enhanced by exposure to sunlight. Leaves and stems. Lower in roots.

Its function is as follows. Probably participates in a plant defense mechanism. Has antibiotic activity. Has a diuretic effect. Has a uterotonic effect in humans. Active against the Gram-positive S.aureus with a minimum inhibition concentration of approximately 0.2 microM. Relatively ineffective against Gram-negative bacteria such as E.coli and P.aeruginosa. Inhibitory effect on the growth and development of larvae from H.punctigera. The unmodified form has hemolytic activity, the oxidized form lacks hemolytic activity. If the protein is linearized, hemolytic activity is lost. The chain is Kalata-B1 (OAK1) from Oldenlandia affinis.